The following is an 883-amino-acid chain: HTH-type transcriptional regulator AlkS (883 aa).

The HTH luxR-type domain occupies 816–881; it reads ENKAGDFLTL…QAIIEAERQG (66 aa). Positions 840–859 form a DNA-binding region, H-T-H motif; it reads NKQIATKMYVTEDAIKWHMR.

It participates in hydrocarbon metabolism; alkane degradation. In terms of biological role, may act as a transcriptional regulator of AlkB. In Pseudomonas putida (Arthrobacter siderocapsulatus), this protein is HTH-type transcriptional regulator AlkS (alkS).